A 77-amino-acid polypeptide reads, in one-letter code: Putative defensin-like protein 160 (77 aa).

The signal sequence occupies residues 1–24 (MAKLSCSYFFILMLVFSALLMVEC). 4 cysteine pairs are disulfide-bonded: Cys-30–Cys-77, Cys-40–Cys-59, Cys-45–Cys-71, and Cys-49–Cys-73.

It belongs to the DEFL family.

The protein resides in the secreted. The protein is Putative defensin-like protein 160 (LCR26) of Arabidopsis thaliana (Mouse-ear cress).